Reading from the N-terminus, the 289-residue chain is Ribonuclease H2 subunit A (289 aa).

Residues Pro-20–Phe-249 enclose the RNase H type-2 domain. Residues Asp-26, Glu-27, and Asp-134 each coordinate a divalent metal cation.

This sequence belongs to the RNase HII family. Eukaryotic subfamily. Mn(2+) is required as a cofactor. Mg(2+) serves as cofactor.

It catalyses the reaction Endonucleolytic cleavage to 5'-phosphomonoester.. Its function is as follows. Endonuclease that specifically degrades the RNA of RNA-DNA hybrids. Participates in DNA replication. The sequence is that of Ribonuclease H2 subunit A (rnaseh2A) from Dictyostelium discoideum (Social amoeba).